We begin with the raw amino-acid sequence, 677 residues long: Penicillin-binding protein activator LpoA (677 aa).

Positions 1–26 (MLPSKIVRHKAGRFVPVLLAGLILAA) are cleaved as a signal peptide. C27 is lipidated: N-palmitoyl cysteine. The S-diacylglycerol cysteine moiety is linked to residue C27. The tract at residues 309–359 (QPADANAVVSPSANPAAAQQSGTAQQPATTQQQPQQQPAAEPASNAQVKVY) is disordered. A compositionally biased stretch (low complexity) spans 313–355 (ANAVVSPSANPAAAQQSGTAQQPATTQQQPQQQPAAEPASNAQ).

This sequence belongs to the LpoA family. In terms of assembly, interacts with PBP1a.

The protein resides in the cell outer membrane. In terms of biological role, regulator of peptidoglycan synthesis that is essential for the function of penicillin-binding protein 1A (PBP1a). This is Penicillin-binding protein activator LpoA from Pantoea ananatis (strain LMG 20103).